A 349-amino-acid polypeptide reads, in one-letter code: S-adenosylmethionine:tRNA ribosyltransferase-isomerase (349 aa).

This sequence belongs to the QueA family. In terms of assembly, monomer.

The protein resides in the cytoplasm. It carries out the reaction 7-aminomethyl-7-carbaguanosine(34) in tRNA + S-adenosyl-L-methionine = epoxyqueuosine(34) in tRNA + adenine + L-methionine + 2 H(+). It participates in tRNA modification; tRNA-queuosine biosynthesis. Its function is as follows. Transfers and isomerizes the ribose moiety from AdoMet to the 7-aminomethyl group of 7-deazaguanine (preQ1-tRNA) to give epoxyqueuosine (oQ-tRNA). The polypeptide is S-adenosylmethionine:tRNA ribosyltransferase-isomerase (Azotobacter vinelandii (strain DJ / ATCC BAA-1303)).